The chain runs to 459 residues: Methylenetetrahydrofolate--tRNA-(uracil-5-)-methyltransferase TrmFO (459 aa).

15–20 (GAGLAG) lines the FAD pocket.

It belongs to the MnmG family. TrmFO subfamily. It depends on FAD as a cofactor.

It localises to the cytoplasm. The enzyme catalyses uridine(54) in tRNA + (6R)-5,10-methylene-5,6,7,8-tetrahydrofolate + NADH + H(+) = 5-methyluridine(54) in tRNA + (6S)-5,6,7,8-tetrahydrofolate + NAD(+). The catalysed reaction is uridine(54) in tRNA + (6R)-5,10-methylene-5,6,7,8-tetrahydrofolate + NADPH + H(+) = 5-methyluridine(54) in tRNA + (6S)-5,6,7,8-tetrahydrofolate + NADP(+). Catalyzes the folate-dependent formation of 5-methyl-uridine at position 54 (M-5-U54) in all tRNAs. The polypeptide is Methylenetetrahydrofolate--tRNA-(uracil-5-)-methyltransferase TrmFO (Syntrophotalea carbinolica (strain DSM 2380 / NBRC 103641 / GraBd1) (Pelobacter carbinolicus)).